The following is a 94-amino-acid chain: Putative regulatory protein Tmel_0100 (94 aa).

Belongs to the RemA family.

This is Putative regulatory protein Tmel_0100 from Thermosipho melanesiensis (strain DSM 12029 / CIP 104789 / BI429).